Consider the following 525-residue polypeptide: ADP-ribosylation factor GTPase-activating protein 3 (525 aa).

The Arf-GAP domain maps to 10 to 126 (LAIFKRLRSV…IKTLATQATR (117 aa)). A C4-type zinc finger spans residues 25 to 48 (CFDCGAKNPSWASISYGVFLCIDC). Positions 160–233 (VSGATQASAQ…KGLGAKKGSL (74 aa)) are disordered. A compositionally biased stretch (polar residues) spans 162 to 177 (GATQASAQPEPASSTP). The segment covering 222-233 (AKKGLGAKKGSL) has biased composition (low complexity). Phosphoserine occurs at positions 232, 242, 271, and 275. Positions 249–271 (QAQAVDKRKEQEDLARGTPKEES) are disordered. Residues 293–305 (LNLSGQKKAEAER) show a composition bias toward basic and acidic residues. Disordered regions lie at residues 293–364 (LNLS…SSSR) and 377–428 (FSSW…EAQK). Residues 319 to 333 (HSVTSDMQTIEQESP) are compositionally biased toward polar residues. The residue at position 332 (Ser-332) is a Phosphoserine. Residues 349-363 (SYFSSSSKWSEQSSS) are compositionally biased toward low complexity. Ser-379 is modified (phosphoserine). Over residues 387–398 (YWKKDSSRDPEP) the composition is skewed to basic and acidic residues. Ser-437, Ser-460, Ser-462, Ser-464, Ser-466, and Ser-467 each carry phosphoserine.

It localises to the cytoplasm. It is found in the golgi apparatus membrane. GAP activity stimulated by phosphatidylinositol 4,5-bisphosphate (PIP2). Functionally, GTPase-activating protein (GAP) for ADP ribosylation factor 1 (ARF1). Hydrolysis of ARF1-bound GTP may lead to dissociation of coatomer from Golgi-derived membranes to allow fusion with target membranes. The protein is ADP-ribosylation factor GTPase-activating protein 3 of Rattus norvegicus (Rat).